The primary structure comprises 74 residues: Conotoxin Cal27 (74 aa).

Positions 1–19 (MSGTGVLLLTLLLLVAMAA) are cleaved as a signal peptide.

In terms of processing, may contain 4 disulfide bonds. Expressed by the venom duct.

The protein resides in the secreted. Probable neurotoxin. The sequence is that of Conotoxin Cal27 from Californiconus californicus (California cone).